Consider the following 413-residue polypeptide: uncharacterized protein (413 aa).

In terms of domain architecture, N-acetyltransferase spans 3 to 155; it reads MEPRVLRREE…SRVRLSVPAG (153 aa). Residues 86-88, 94-99, and 122-123 each bind acetyl-CoA; these read VSV, RRGVLT, and SE. Catalysis depends on Y127, which acts as the Proton donor. F413 serves as the catalytic Proton acceptor; via carboxylate.

Belongs to the acetyltransferase Eis family. Homohexamer; trimer of dimers.

This is an uncharacterized protein from Streptomyces coelicolor (strain ATCC BAA-471 / A3(2) / M145).